Here is a 166-residue protein sequence, read N- to C-terminus: Interferon gamma (166 aa).

The first 23 residues, 1 to 23 (MNYTSFILAFQLCAILGSSTYYC), serve as a signal peptide directing secretion. Gln-24 bears the Pyrrolidone carboxylic acid mark. Residues Asn-39 and Asn-106 are each glycosylated (N-linked (GlcNAc...) asparagine). The tract at residues 147 to 166 (ANLRKRKRSQNPFRGRRALQ) is disordered. Over residues 148–166 (NLRKRKRSQNPFRGRRALQ) the composition is skewed to basic residues.

The protein belongs to the type II (or gamma) interferon family. Homodimer. Interacts with IFNGR1 (via extracellular domain); this interaction promotes IFNGR1 dimerization. As to expression, released primarily from activated T lymphocytes.

Its subcellular location is the secreted. Its function is as follows. Type II interferon produced by immune cells such as T-cells and NK cells that plays crucial roles in antimicrobial, antiviral, and antitumor responses by activating effector immune cells and enhancing antigen presentation. Primarily signals through the JAK-STAT pathway after interaction with its receptor IFNGR1 to affect gene regulation. Upon IFNG binding, IFNGR1 intracellular domain opens out to allow association of downstream signaling components JAK2, JAK1 and STAT1, leading to STAT1 activation, nuclear translocation and transcription of IFNG-regulated genes. Many of the induced genes are transcription factors such as IRF1 that are able to further drive regulation of a next wave of transcription. Plays a role in class I antigen presentation pathway by inducing a replacement of catalytic proteasome subunits with immunoproteasome subunits. In turn, increases the quantity, quality, and repertoire of peptides for class I MHC loading. Increases the efficiency of peptide generation also by inducing the expression of activator PA28 that associates with the proteasome and alters its proteolytic cleavage preference. Up-regulates as well MHC II complexes on the cell surface by promoting expression of several key molecules such as cathepsins B/CTSB, H/CTSH, and L/CTSL. Participates in the regulation of hematopoietic stem cells during development and under homeostatic conditions by affecting their development, quiescence, and differentiation. In Equus caballus (Horse), this protein is Interferon gamma (IFNG).